The primary structure comprises 267 residues: Levodione reductase (267 aa).

An NAD(+)-binding site is contributed by 17–42 (LITGGGSGLGRATAVRLAAEGAKLSL). Substrate is bound at residue Ser-152. The Proton acceptor role is filled by Tyr-165.

It belongs to the short-chain dehydrogenases/reductases (SDR) family.

The catalysed reaction is (4R)-hydroxy-(6R)-2,2,6-trimethylcyclohexanone + NAD(+) = (6R)-2,2,6-trimethyl-1,4-cyclohexanedione + NADH + H(+). Its activity is regulated as follows. Strongly activated by monovalent cations, such as K(+), Na(+), and NH4(+). Catalyzes the regio- and stereoselective reversible NAD-dependent reduction of (6R)-2,2,6-trimethyl-1,4-cyclohexanedione (levodione) to (4R,6R)-4-hydroxy-2,2,6-trimethylcyclohexanone (actinol). This chain is Levodione reductase (lvr), found in Leifsonia aquatica (Corynebacterium aquaticum).